A 314-amino-acid polypeptide reads, in one-letter code: Probable cell division protein WhiA (314 aa).

Residues 274-308 constitute a DNA-binding region (H-T-H motif); it reads SLKELGEMVSTGPISKSGVNHRLRKLNDLADKIRN.

This sequence belongs to the WhiA family.

In terms of biological role, involved in cell division and chromosome segregation. The polypeptide is Probable cell division protein WhiA (Staphylococcus aureus (strain Mu3 / ATCC 700698)).